Consider the following 195-residue polypeptide: Glycerol-3-phosphate acyltransferase (195 aa).

5 consecutive transmembrane segments (helical) span residues 3–23 (IHAV…GLIL), 53–73 (AVMT…LAKI), 80–100 (FAFI…WLLF), 115–135 (LIEY…FAIF), and 147–167 (IFVA…VFIA).

Belongs to the PlsY family. Probably interacts with PlsX.

It localises to the cell inner membrane. It carries out the reaction an acyl phosphate + sn-glycerol 3-phosphate = a 1-acyl-sn-glycero-3-phosphate + phosphate. The protein operates within lipid metabolism; phospholipid metabolism. Functionally, catalyzes the transfer of an acyl group from acyl-phosphate (acyl-PO(4)) to glycerol-3-phosphate (G3P) to form lysophosphatidic acid (LPA). This enzyme utilizes acyl-phosphate as fatty acyl donor, but not acyl-CoA or acyl-ACP. In Ehrlichia chaffeensis (strain ATCC CRL-10679 / Arkansas), this protein is Glycerol-3-phosphate acyltransferase.